A 39-amino-acid chain; its full sequence is Gonadal protein gdl-ORF39 (39 aa).

In bundles of maturing sperm of larval, pupal and adult males.

This Drosophila melanogaster (Fruit fly) protein is Gonadal protein gdl-ORF39 (gdl-ORF39).